Consider the following 220-residue polypeptide: Redox-sensing transcriptional repressor Rex (220 aa).

A DNA-binding region (H-T-H motif) is located at residues 25–64 (WYLSNVKLLKQKGERYVSSTQISKEINIDASQIAKDLSYV). 99-104 (GVGSLG) is a binding site for NAD(+).

The protein belongs to the transcriptional regulatory Rex family. As to quaternary structure, homodimer.

Its subcellular location is the cytoplasm. Its function is as follows. Modulates transcription in response to changes in cellular NADH/NAD(+) redox state. The chain is Redox-sensing transcriptional repressor Rex from Bacteroides fragilis (strain ATCC 25285 / DSM 2151 / CCUG 4856 / JCM 11019 / LMG 10263 / NCTC 9343 / Onslow / VPI 2553 / EN-2).